The sequence spans 473 residues: Ribulose bisphosphate carboxylase large chain (473 aa).

Asn116 and Thr166 together coordinate substrate. The active-site Proton acceptor is the Lys168. Substrate is bound at residue Lys170. 3 residues coordinate Mg(2+): Lys194, Asp196, and Glu197. At Lys194 the chain carries N6-carboxylysine. The active-site Proton acceptor is the His287. Substrate is bound by residues Arg288, His320, and Ser372.

Belongs to the RuBisCO large chain family. Type I subfamily. In terms of assembly, heterohexadecamer of 8 large chains and 8 small chains. Mg(2+) is required as a cofactor.

The catalysed reaction is 2 (2R)-3-phosphoglycerate + 2 H(+) = D-ribulose 1,5-bisphosphate + CO2 + H2O. The enzyme catalyses D-ribulose 1,5-bisphosphate + O2 = 2-phosphoglycolate + (2R)-3-phosphoglycerate + 2 H(+). In terms of biological role, ruBisCO catalyzes two reactions: the carboxylation of D-ribulose 1,5-bisphosphate, the primary event in carbon dioxide fixation, as well as the oxidative fragmentation of the pentose substrate. Both reactions occur simultaneously and in competition at the same active site. This is Ribulose bisphosphate carboxylase large chain from Methylococcus capsulatus (strain ATCC 33009 / NCIMB 11132 / Bath).